Consider the following 757-residue polypeptide: Probable phospholipase C20G8.02, mitochondrial (757 aa).

Residues methionine 1 to threonine 13 constitute a mitochondrion transit peptide. The disordered stretch occupies residues glutamate 289–leucine 330. Polar residues predominate over residues glutamate 302–aspartate 329. The active site involves serine 524. In terms of domain architecture, DDHD spans leucine 547–leucine 757.

This sequence belongs to the PA-PLA1 family.

Its subcellular location is the mitochondrion. In terms of biological role, probable phospholipase that hydrolyzes phosphatidic acid. The chain is Probable phospholipase C20G8.02, mitochondrial from Schizosaccharomyces pombe (strain 972 / ATCC 24843) (Fission yeast).